Reading from the N-terminus, the 779-residue chain is Protein phosphatase 1 regulatory subunit 21 (779 aa).

Coiled coils occupy residues 2–212 (AATA…QAAL) and 556–614 (TESR…ETVQ). Disordered regions lie at residues 85–105 (ETRG…SQEQ) and 612–637 (TVQE…QREP). Over residues 96–105 (ESSSQLSQEQ) the composition is skewed to low complexity. The span at 624–637 (EQKEETTEKSQREP) shows a compositional bias: basic and acidic residues. Residues 693-739 (AECRALAKRLSLAEKSKESLTEELKLASQSISRLQDELMTTKRSYED) adopt a coiled-coil conformation. Positions 760–779 (EEIDTLKMTSKGNSKKNKTR) are disordered.

Component of the FERRY complex.

Its subcellular location is the early endosome. Its function is as follows. Component of the FERRY complex (Five-subunit Endosomal Rab5 and RNA/ribosome intermediary). The FERRY complex directly interacts with mRNAs and RAB5A, and functions as a RAB5A effector involved in the localization and the distribution of specific mRNAs most likely by mediating their endosomal transport. The complex recruits mRNAs and ribosomes to early endosomes through direct mRNA-interaction. Putative regulator of protein phosphatase 1 (PP1) activity. May play a role in the endosomal sorting process or in endosome maturation pathway. In Gallus gallus (Chicken), this protein is Protein phosphatase 1 regulatory subunit 21 (PPP1R21).